We begin with the raw amino-acid sequence, 82 residues long: Acyl carrier protein (82 aa).

Positions 3-78 constitute a Carrier domain; the sequence is QEIFERVKKV…KAVEHISEKV (76 aa). Position 38 is an O-(pantetheine 4'-phosphoryl)serine (serine 38).

It belongs to the acyl carrier protein (ACP) family. 4'-phosphopantetheine is transferred from CoA to a specific serine of apo-ACP by AcpS. This modification is essential for activity because fatty acids are bound in thioester linkage to the sulfhydryl of the prosthetic group.

It is found in the cytoplasm. It participates in lipid metabolism; fatty acid biosynthesis. In terms of biological role, carrier of the growing fatty acid chain in fatty acid biosynthesis. The sequence is that of Acyl carrier protein from Gloeothece citriformis (strain PCC 7424) (Cyanothece sp. (strain PCC 7424)).